The primary structure comprises 351 residues: Modulator of apoptosis 1 (351 aa).

Positions 49 to 52 match the LIR motif; it reads YRLL. Residues 120–127 form a BH3-like region; it reads LTRALAHE. Residues 202-205 are RASSF1-binding; that stretch reads KRRR.

It belongs to the PNMA family. Homodimer. Under normal circumstances, held in an inactive conformation by an intramolecular interaction. Interacts with BAX. Binding to RASSF1 isoform A (RASSF1A) relieves this inhibitory interaction and allows further binding to BAX. Also binds to BCL2 and BCLX. Recruited to the TNFRSF1A and TNFRSF10A complexes in response to their respective cognate ligand, after internalization. Interacts with TRIM39. Interacts with RASSF6. Interacts with ATG8 proteins MAP1LC3A, MAP1LC3B and MAP1LC3C. Does not interact with ATG8 proteins GABARAPL1, GABARAPL2 and GABARAP. Interacts with SQSTM1; promoting dissociation of SQSTM1 inclusion bodies that sequester KEAP1. In terms of processing, ubiquitinated and degraded during mitotic exit by APC/C-Cdh1, this modification is inhibited by TRIM39.

It localises to the cytoplasm. The protein resides in the cytosol. The protein localises to the mitochondrion outer membrane. Its subcellular location is the extracellular vesicle membrane. Retrotransposon-derived protein that forms virion-like capsids. Acts as an effector of BAX during apoptosis: enriched at outer mitochondria membrane and associates with BAX upon induction of apoptosis, facilitating BAX-dependent mitochondrial outer membrane permeabilization and apoptosis. Required for death receptor-dependent apoptosis. When associated with RASSF1, promotes BAX conformational change and translocation to mitochondrial membranes in response to TNF and TNFSF10 stimulation. Also promotes autophagy: promotes phagophore closure via association with ATG8 proteins. Acts as an inhibitor of the NFE2L2/NRF2 pathway via interaction with SQSTM1: interaction promotes dissociation of SQSTM1 inclusion bodies that sequester KEAP1, relieving inactivation of the BCR(KEAP1) complex. The sequence is that of Modulator of apoptosis 1 from Macaca fascicularis (Crab-eating macaque).